A 256-amino-acid polypeptide reads, in one-letter code: DNA repair protein RecO (256 aa).

This sequence belongs to the RecO family.

Involved in DNA repair and RecF pathway recombination. In Delftia acidovorans (strain DSM 14801 / SPH-1), this protein is DNA repair protein RecO.